A 250-amino-acid polypeptide reads, in one-letter code: MNIEEILPELFGEKRVYYCQRCLNHGLREKRKNHKLSCTFRFCQCSNCIMVERRRQLNSRLMQIDGSRDEKPMTTLTMALTCSEEDQMECTSQSETTNESSGEDKDDGKPKERRPNCQRCAQHSVVNRLKGHKRACPFRDCFCAKCQVVVERQKLMADQIKLRRRQKREKNNLNSEREAPIAHSMTPSPIDTVTTTTTPTSETSTPMCLKCAQQVIGYQQLLSLLDPSATLQDPMITLSAVLSACPHKNE.

The segment at residues 19–68 (CQRCLNHGLREKRKNHKLSCTFRFCQCSNCIMVERRRQLNSRLMQIDGSR) is a DNA-binding region (DM 1). The span at 90–100 (CTSQSETTNES) shows a compositional bias: polar residues. The segment at 90 to 115 (CTSQSETTNESSGEDKDDGKPKERRP) is disordered. Residues 102–115 (GEDKDDGKPKERRP) show a composition bias toward basic and acidic residues. Residues 117–164 (CQRCAQHSVVNRLKGHKRACPFRDCFCAKCQVVVERQKLMADQIKLRR) constitute a DNA-binding region (DM 2). Positions 166-201 (QKREKNNLNSEREAPIAHSMTPSPIDTVTTTTTPTS) are disordered. Residues 169 to 180 (EKNNLNSEREAP) show a composition bias toward basic and acidic residues. Over residues 186–201 (TPSPIDTVTTTTTPTS) the composition is skewed to low complexity.

This sequence belongs to the DMRT family. As to expression, in males, expressed in the tail tip. Specifically, expressed in 15 male-specific muscles of the tail tip called the diagonal muscles, and also in core body muscles of both males and hermaphrodites. In males, expressed in ray A-neurons. In males, expressed in PHC sensory neurons. In males, it is also expressed in the hindgut, B lineage and somatic gonad. In hermaphrodites, expressed in the anchor cell only.

The protein localises to the nucleus. It localises to the perikaryon. Functionally, transcriptional activator which promotes male-specific development. Acts partially redundantly with the transcription factor mab-3 to coordinate tail tip cell fusion and retraction and thereby regulate male tail tip morphogenesis. This is most likely through the regulation of downstream effectors such as eff-1. May also negatively regulate the expression of other proteins implicated in male tail morphogenesis including nhr-25, vav-1 and arl-1 in tail tip cells. In males, plays a role in the development of ray A-neurons by negatively regulating the activity of the transcription factor ast-1. Plays a role in the male-specific differentiation of PHC sensory neurons into densely connected hub sensory neurons. Plays a role in male mating behavior. This is Doublesex- and mab-3-related transcription factor dmd-3 from Caenorhabditis elegans.